Reading from the N-terminus, the 469-residue chain is Ribulose bisphosphate carboxylase large chain (469 aa).

Positions 1 to 2 are excised as a propeptide; the sequence is MS. Pro3 is modified (N-acetylproline). The residue at position 14 (Lys14) is an N6,N6,N6-trimethyllysine. 2 residues coordinate substrate: Asn123 and Thr173. Residue Lys175 is the Proton acceptor of the active site. Residue Lys177 coordinates substrate. Lys201, Asp203, and Glu204 together coordinate Mg(2+). Lys201 bears the N6-carboxylysine mark. His294 functions as the Proton acceptor in the catalytic mechanism. The substrate site is built by Arg295, His327, and Ser379.

Belongs to the RuBisCO large chain family. Type I subfamily. As to quaternary structure, heterohexadecamer of 8 large chains and 8 small chains; disulfide-linked. The disulfide link is formed within the large subunit homodimers. Mg(2+) is required as a cofactor. The disulfide bond which can form in the large chain dimeric partners within the hexadecamer appears to be associated with oxidative stress and protein turnover.

The protein resides in the plastid. It is found in the chloroplast. The enzyme catalyses 2 (2R)-3-phosphoglycerate + 2 H(+) = D-ribulose 1,5-bisphosphate + CO2 + H2O. It catalyses the reaction D-ribulose 1,5-bisphosphate + O2 = 2-phosphoglycolate + (2R)-3-phosphoglycerate + 2 H(+). Functionally, ruBisCO catalyzes two reactions: the carboxylation of D-ribulose 1,5-bisphosphate, the primary event in carbon dioxide fixation, as well as the oxidative fragmentation of the pentose substrate in the photorespiration process. Both reactions occur simultaneously and in competition at the same active site. This chain is Ribulose bisphosphate carboxylase large chain, found in Dianthus caryophyllus (Carnation).